The primary structure comprises 266 residues: MRHLALEMISELLDLGLDTIDGWLHTEFRPVPAGVSHNMSLHEMYDLDVTGQEDENEEAVDGVFSDAMLLAAEEGIEMPNLYSPGPLVGGGEMPELQPEEEDLFCYEDGFPPSDSEEGEHSQVETERKMAEAAAAGAAAAARREQDDFRLDCPSVPGHGCSSCDYHRKTSGCPEILCSLCYLRANSMFIYSPVSDSEPDEPDSTTADSNHGSPPTLRCTPPRDLPRPVPVKASPGKRPAVNSLHDLIEEVEQTVPLDLSLKRSRSN.

An interaction with RB1 in competition with E2F1 region spans residues 39–47 (MSLHEMYDL). Positions 94-98 (PELQP) match the PXLXP motif, interaction with host ZMYND11 motif. The LXCXE motif, interaction with host RB1 motif lies at 103 to 107 (LFCYE). The segment at 160–180 (CSSCDYHRKTSGCPEILCSLC) is a zinc-finger region. The segment at 193–244 (VSDSEPDEPDSTTADSNHGSPPTLRCTPPRDLPRPVPVKASPGKRPAVNSLH) is disordered. Residues 203–212 (STTADSNHGS) are compositionally biased toward polar residues. The PXDLS motif, CTBP-binding signature appears at 255–259 (PLDLS). Positions 261–265 (KRSRS) match the Nuclear localization signal motif.

This sequence belongs to the adenoviridae E1A protein family. In terms of assembly, interacts with host UBE2I; this interaction interferes with polySUMOylation. Interacts with host RB1; this interaction induces the aberrant dissociation of RB1-E2F1 complex thereby disrupting the activity of RB1 and activating E2F1-regulated genes. Interacts with host ATF7; the interaction enhances ATF7-mediated viral transactivation activity which requires the zinc binding domains of both proteins. Isoform early E1A 32 kDa protein and isoform early E1A 26 kDa protein interact (via N-terminus) with CUL1 and E3 ubiquitin ligase RBX1; these interactions inhibit RBX1-CUL1-dependent elongation reaction of ubiquitin chains and attenuate ubiquitination of SCF(FBXW7) target proteins. Interacts (via PXLXP motif) with host ZMYND11/BS69 (via MYND-type zinc finger); this interaction inhibits E1A mediated transactivation. Interacts with host EP300; this interaction stimulates the acetylation of RB1 by recruiting EP300 and RB1 into a multimeric-protein complex. Interacts with host CTBP1 and CTBP2; this interaction seems to potentiate viral replication. Interacts with host DCAF7. Interacts with host DYRK1A. Interacts with host KPNA4; this interaction allows E1A import into the host nucleus. Interacts with host EP400; this interaction stabilizes MYC. Interacts with host TBP protein; this interaction probably disrupts the TBP-TATA complex.

It is found in the host nucleus. Plays a role in viral genome replication by driving entry of quiescent cells into the cell cycle. Stimulation of progression from G1 to S phase allows the virus to efficiently use the cellular DNA replicating machinery to achieve viral genome replication. E1A protein has both transforming and trans-activating activities. Induces the disassembly of the E2F1 transcription factor from RB1 by direct competition for the same binding site on RB1, with subsequent transcriptional activation of E2F1-regulated S-phase genes and of the E2 region of the adenoviral genome. Release of E2F1 leads to the ARF-mediated inhibition of MDM2 and causes TP53/p53 to accumulate because it is not targeted for degradation by MDM2-mediated ubiquitination anymore. This increase in TP53, in turn, would arrest the cell proliferation and direct its death but this effect is counteracted by the viral protein E1B-55K. Inactivation of the ability of RB1 to arrest the cell cycle is critical for cellular transformation, uncontrolled cellular growth and proliferation induced by viral infection. Interaction with RBX1 and CUL1 inhibits ubiquitination of the proteins targeted by SCF(FBXW7) ubiquitin ligase complex, and may be linked to unregulated host cell proliferation. The tumorigenesis-restraining activity of E1A may be related to the disruption of the host CtBP-CtIP complex through the CtBP binding motif. The chain is Early E1A protein from Simian adenovirus serotype 7 (SAdV-7).